Here is a 200-residue protein sequence, read N- to C-terminus: MTTTVGIAVKEGVVLATDKRVTAGYYIAHKQGEKIWKIDDHVAATMSGGVADLQSLLSFLTLRAREYKIEYKRPIPIRALVNYVSLILFYSRPYIYLVHSIIGGVDREEGAVLYMVDWLGTVTRERYIATGSGSPYAKGALEVGYREDMSLEDAVDLAIRSVKAAIRNDPGSGEGIDVVVITKEGFRRVFTAQQKIIITE.

Residue M1 is a propeptide, removed in mature form; by autocatalysis. T2 serves as the catalytic Nucleophile.

Belongs to the peptidase T1B family. The 20S proteasome core is composed of 14 alpha and 14 beta subunits that assemble into four stacked heptameric rings, resulting in a barrel-shaped structure. The two inner rings, each composed of seven catalytic beta subunits, are sandwiched by two outer rings, each composed of seven alpha subunits. The catalytic chamber with the active sites is on the inside of the barrel. Has a gated structure, the ends of the cylinder being occluded by the N-termini of the alpha-subunits. Is capped at one or both ends by the proteasome regulatory ATPase, PAN.

It is found in the cytoplasm. The catalysed reaction is Cleavage of peptide bonds with very broad specificity.. With respect to regulation, the formation of the proteasomal ATPase PAN-20S proteasome complex, via the docking of the C-termini of PAN into the intersubunit pockets in the alpha-rings, triggers opening of the gate for substrate entry. Interconversion between the open-gate and close-gate conformations leads to a dynamic regulation of the 20S proteasome proteolysis activity. In terms of biological role, component of the proteasome core, a large protease complex with broad specificity involved in protein degradation. This Pyrobaculum islandicum (strain DSM 4184 / JCM 9189 / GEO3) protein is Proteasome subunit beta 2.